We begin with the raw amino-acid sequence, 311 residues long: Methionyl-tRNA formyltransferase (311 aa).

S109–P112 contributes to the (6S)-5,6,7,8-tetrahydrofolate binding site.

The protein belongs to the Fmt family.

The catalysed reaction is L-methionyl-tRNA(fMet) + (6R)-10-formyltetrahydrofolate = N-formyl-L-methionyl-tRNA(fMet) + (6S)-5,6,7,8-tetrahydrofolate + H(+). Attaches a formyl group to the free amino group of methionyl-tRNA(fMet). The formyl group appears to play a dual role in the initiator identity of N-formylmethionyl-tRNA by promoting its recognition by IF2 and preventing the misappropriation of this tRNA by the elongation apparatus. The chain is Methionyl-tRNA formyltransferase from Acetivibrio thermocellus (strain ATCC 27405 / DSM 1237 / JCM 9322 / NBRC 103400 / NCIMB 10682 / NRRL B-4536 / VPI 7372) (Clostridium thermocellum).